The chain runs to 138 residues: MTVYTGIDIVEIARIKRAVERWGDRFVQRIYSPAEIALCAGRINSLAARWAAKEAVAKLLGVGMRGPGSSAHSVAFRDIETLTDDDGRPTVTLSGAARARARELHIESICISLSHDHGLAIAVAVASTSPAARRRMPW.

Mg(2+) is bound by residues Asp-8 and Glu-54.

It belongs to the P-Pant transferase superfamily. AcpS family. It depends on Mg(2+) as a cofactor.

Its subcellular location is the cytoplasm. The catalysed reaction is apo-[ACP] + CoA = holo-[ACP] + adenosine 3',5'-bisphosphate + H(+). Transfers the 4'-phosphopantetheine moiety from coenzyme A to a Ser of acyl-carrier-protein. In Roseiflexus sp. (strain RS-1), this protein is Holo-[acyl-carrier-protein] synthase.